The sequence spans 967 residues: MGPGQPASTCVHLAPRTQLDGRSDPKVLQTQNQLQFNRNVPTHSSNLAIRYSCPHAIRIEKLKHSYNESYHCKDADCRVGPDLGSSVSFSVISQERLSYAVHLARRDVKRRQFEKHIKEHHLRSQPQSSQKCGHTKYKIPDHRVERKESKSQAACQCSHQPSKVEISSSGAKVYLYSSHPGQSDLTVPNSPPTHDPGLQPHPRIGDHKNISEQKSLLEVQRLQKELSSCIHKIEEVTKKDRLEEALDPDEERRIRIRRQEQAARSARMLYVLQQQVKEIQEELDKLSPHKIKHTKKSWAMSKLAAAHRGAIRALQMFVTQFTDRGEHPLPARCKELGSLIRQLSLCSVKLDADPSVPDVVIDILQQIEALESLLEKKLSPKKVKKCFSEIRSRFPIGSQKALERWPSTSPKGERRPLTAKDTFPQETSRPSVAKQLLADKYQPDTELPETQRLQSELDVLDADIVLEEGPFILDQSASFKDEVLAVAKTKAGKKKPVTENVPFRKKDTLAPARQQGLRKAERGRQSQPHSKSRVQQTTVSSRLKMNRQPVKDRKAPWIPPNPTSPPASPKCAAWLKVKTSPRDATKEPLQQEDPQEESHLTGAVEHEAARLAWLDAETSKRLKELEELKAKEIDSMQKQRLDWLDAETSRRTKELNELKAEEMYRLQQLSVSATHLADKVEEAVLDRLKPLLVKAQRVNSTTEANIHLKDGSSVNTAKAQPAQEVAAVDFESNNIRQLDDFLEDCASELWAVTHAKILGSETLATVEDSKDSPDLEIMMRRMEEMEKYQESVRQRYNKIAYADPRLWMQEENNDQKISAISEKPLSPHPIRITKTVDRKDPAVNIMLERPCNGNSLDESVGTEEGSEKREAPLLSLAEDSQQKEGRAPLFVPPGMQHSIGDYCSRFEQYLRIISHEAVGSFNPWLIAESFSEELVDEALGAVAAELQDMCEDYAEAVFTSEFLEAAT.

Residues 178-201 form a disordered region; the sequence is SHPGQSDLTVPNSPPTHDPGLQPH. A compositionally biased stretch (polar residues) spans 179–188; sequence HPGQSDLTVP. Residues Ser-287 and Ser-409 each carry the phosphoserine modification. 2 disordered regions span residues 401-431 and 490-601; these read ALERWPSTSPKGERRPLTAKDTFPQETSRPS and KAGK…SHLT. The segment covering 525 to 543 has biased composition (polar residues); that stretch reads QSQPHSKSRVQQTTVSSRL. The segment covering 557–568 has biased composition (pro residues); that stretch reads WIPPNPTSPPAS. Residues 616 to 642 adopt a coiled-coil conformation; it reads AETSKRLKELEELKAKEIDSMQKQRLD. A phosphoserine mark is found at Ser-700 and Ser-826. The tract at residues 849–872 is disordered; the sequence is RPCNGNSLDESVGTEEGSEKREAP. A necessary and sufficient for CEP20-binding region spans residues 885 to 967; that stretch reads GRAPLFVPPG…FTSEFLEAAT (83 aa).

Interacts with CEP63. Interacts with WDR62. Forms a complex with OFD1 and CEP20/FOR20. Interacts with PCM1.

It localises to the cytoplasm. The protein resides in the cytoskeleton. It is found in the microtubule organizing center. The protein localises to the centrosome. Its subcellular location is the centriole. It localises to the centriolar satellite. In terms of biological role, involved in centriole duplication. Positively regulates CEP63 centrosomal localization. Required for WDR62 centrosomal localization and promotes the centrosomal localization of CDK2. May play a role in cilium assembly. The polypeptide is Protein moonraker (KIAA0753) (Homo sapiens (Human)).